Here is a 296-residue protein sequence, read N- to C-terminus: 4-hydroxy-tetrahydrodipicolinate synthase (296 aa).

Residue T49 coordinates pyruvate. The Proton donor/acceptor role is filled by Y137. The active-site Schiff-base intermediate with substrate is the K166. I208 contacts pyruvate.

The protein belongs to the DapA family. As to quaternary structure, homotetramer; dimer of dimers.

The protein localises to the cytoplasm. It catalyses the reaction L-aspartate 4-semialdehyde + pyruvate = (2S,4S)-4-hydroxy-2,3,4,5-tetrahydrodipicolinate + H2O + H(+). Its pathway is amino-acid biosynthesis; L-lysine biosynthesis via DAP pathway; (S)-tetrahydrodipicolinate from L-aspartate: step 3/4. In terms of biological role, catalyzes the condensation of (S)-aspartate-beta-semialdehyde [(S)-ASA] and pyruvate to 4-hydroxy-tetrahydrodipicolinate (HTPA). The polypeptide is 4-hydroxy-tetrahydrodipicolinate synthase (Chlorobaculum parvum (strain DSM 263 / NCIMB 8327) (Chlorobium vibrioforme subsp. thiosulfatophilum)).